The sequence spans 409 residues: G2/mitotic-specific cyclin-B (409 aa).

It belongs to the cyclin family. Cyclin AB subfamily. Interacts with the CDK1 protein kinase to form a serine/threonine kinase holoenzyme complex also known as maturation promoting factor (MPF). The cyclin subunit imparts substrate specificity to the complex.

Essential for the control of the cell cycle at the G2/M (mitosis) transition. The chain is G2/mitotic-specific cyclin-B from Arbacia punctulata (Punctuate sea urchin).